The chain runs to 366 residues: UDP-N-acetylglucosamine--N-acetylmuramyl-(pentapeptide) pyrophosphoryl-undecaprenol N-acetylglucosamine transferase (366 aa).

Residues 14-16, asparagine 125, arginine 168, serine 196, and glutamine 297 contribute to the UDP-N-acetyl-alpha-D-glucosamine site; that span reads TGG.

This sequence belongs to the glycosyltransferase 28 family. MurG subfamily.

It localises to the cell inner membrane. The catalysed reaction is di-trans,octa-cis-undecaprenyl diphospho-N-acetyl-alpha-D-muramoyl-L-alanyl-D-glutamyl-meso-2,6-diaminopimeloyl-D-alanyl-D-alanine + UDP-N-acetyl-alpha-D-glucosamine = di-trans,octa-cis-undecaprenyl diphospho-[N-acetyl-alpha-D-glucosaminyl-(1-&gt;4)]-N-acetyl-alpha-D-muramoyl-L-alanyl-D-glutamyl-meso-2,6-diaminopimeloyl-D-alanyl-D-alanine + UDP + H(+). Its pathway is cell wall biogenesis; peptidoglycan biosynthesis. In terms of biological role, cell wall formation. Catalyzes the transfer of a GlcNAc subunit on undecaprenyl-pyrophosphoryl-MurNAc-pentapeptide (lipid intermediate I) to form undecaprenyl-pyrophosphoryl-MurNAc-(pentapeptide)GlcNAc (lipid intermediate II). This is UDP-N-acetylglucosamine--N-acetylmuramyl-(pentapeptide) pyrophosphoryl-undecaprenol N-acetylglucosamine transferase from Rhodopseudomonas palustris (strain HaA2).